The primary structure comprises 212 residues: Octanoyltransferase (212 aa).

The 179-residue stretch at 31-209 (AETQDEIWLV…HFADLLGYNI (179 aa)) folds into the BPL/LPL catalytic domain. Substrate is bound by residues 70–77 (RGGQITYH), 138–140 (SLG), and 151–153 (GLA). The Acyl-thioester intermediate role is filled by Cys-169.

It belongs to the LipB family.

It is found in the cytoplasm. The catalysed reaction is octanoyl-[ACP] + L-lysyl-[protein] = N(6)-octanoyl-L-lysyl-[protein] + holo-[ACP] + H(+). It functions in the pathway protein modification; protein lipoylation via endogenous pathway; protein N(6)-(lipoyl)lysine from octanoyl-[acyl-carrier-protein]: step 1/2. Catalyzes the transfer of endogenously produced octanoic acid from octanoyl-acyl-carrier-protein onto the lipoyl domains of lipoate-dependent enzymes. Lipoyl-ACP can also act as a substrate although octanoyl-ACP is likely to be the physiological substrate. This is Octanoyltransferase from Haemophilus influenzae (strain PittEE).